The primary structure comprises 322 residues: tRNA dimethylallyltransferase (322 aa).

19–26 (GPTASGKT) is a binding site for ATP. 21–26 (TASGKT) is a substrate binding site. Interaction with substrate tRNA stretches follow at residues 44-47 (DSAL), 168-172 (QRIQR), and 255-260 (RCVGYR).

It belongs to the IPP transferase family. Monomer. Requires Mg(2+) as cofactor.

It carries out the reaction adenosine(37) in tRNA + dimethylallyl diphosphate = N(6)-dimethylallyladenosine(37) in tRNA + diphosphate. Its function is as follows. Catalyzes the transfer of a dimethylallyl group onto the adenine at position 37 in tRNAs that read codons beginning with uridine, leading to the formation of N6-(dimethylallyl)adenosine (i(6)A). In Cupriavidus taiwanensis (strain DSM 17343 / BCRC 17206 / CCUG 44338 / CIP 107171 / LMG 19424 / R1) (Ralstonia taiwanensis (strain LMG 19424)), this protein is tRNA dimethylallyltransferase.